A 447-amino-acid polypeptide reads, in one-letter code: DNA primase DnaG (447 aa).

Residues 200–274 (DSIIVVEGRA…DIDYVARAPE (75 aa)) form the Toprim domain. Residues Glu-206, Asp-248, and Asp-250 each coordinate Mg(2+).

This sequence belongs to the archaeal DnaG primase family. As to quaternary structure, forms a ternary complex with MCM helicase and DNA. Component of the archaeal exosome complex. Requires Mg(2+) as cofactor.

The enzyme catalyses ssDNA + n NTP = ssDNA/pppN(pN)n-1 hybrid + (n-1) diphosphate.. In terms of biological role, RNA polymerase that catalyzes the synthesis of short RNA molecules used as primers for DNA polymerase during DNA replication. Also part of the exosome, which is a complex involved in RNA degradation. Acts as a poly(A)-binding protein that enhances the interaction between heteromeric, adenine-rich transcripts and the exosome. This Pyrococcus horikoshii (strain ATCC 700860 / DSM 12428 / JCM 9974 / NBRC 100139 / OT-3) protein is DNA primase DnaG.